We begin with the raw amino-acid sequence, 538 residues long: Putative cysteine ligase BshC (538 aa).

Residues Lys-460–Leu-484 are a coiled coil.

Belongs to the BshC family.

Functionally, involved in bacillithiol (BSH) biosynthesis. May catalyze the last step of the pathway, the addition of cysteine to glucosamine malate (GlcN-Mal) to generate BSH. This chain is Putative cysteine ligase BshC, found in Bacillus cereus (strain AH187).